We begin with the raw amino-acid sequence, 280 residues long: Equatorin (280 aa).

Residues 1 to 19 form the signal peptide; the sequence is MDFILLIFLSGVFLPNIFS. Residues 20 to 183 are Vesicular-facing; that stretch reads LQPTVEQDPG…LSELEEIKLK (164 aa). Positions 112–131 are disordered; the sequence is ATASGEEDKRSEPSRKSSTP. Residues 117-126 are compositionally biased toward basic and acidic residues; the sequence is EEDKRSEPSR. An N-linked (GlcNAc...) asparagine glycan is attached at asparagine 145. The helical transmembrane segment at 184-204 threads the bilayer; that stretch reads LMLGISLMTLILLIPLLIFCF. At 205-280 the chain is on the cytoplasmic side; that stretch reads ATLYKLRHLR…AEVTEERISE (76 aa). At serine 279 the chain carries Phosphoserine.

As to quaternary structure, interacts with SNAP25. Post-translationally, highly N- and O-glycosylated; contains sialic acid. As to expression, highly expressed in testis and epididymis. Low expression in other tissues.

The protein resides in the cytoplasmic vesicle. It localises to the secretory vesicle. The protein localises to the acrosome membrane. It is found in the acrosome inner membrane. Its subcellular location is the acrosome outer membrane. Functionally, acrosomal membrane-anchored protein involved in the process of fertilization and in acrosome biogenesis. This chain is Equatorin (Eqtn), found in Rattus norvegicus (Rat).